The sequence spans 443 residues: Serine/threonine-protein kinase ISR1 (443 aa).

The 281-residue stretch at 135-415 (LPSNKLVGQG…LRNDLFQDWK (281 aa)) folds into the Protein kinase domain. ATP contacts are provided by residues 141-149 (VGQGSYSYV) and Lys169. Catalysis depends on Asp280, which acts as the Proton acceptor.

The protein belongs to the protein kinase superfamily. Ser/Thr protein kinase family.

It catalyses the reaction L-seryl-[protein] + ATP = O-phospho-L-seryl-[protein] + ADP + H(+). The catalysed reaction is L-threonyl-[protein] + ATP = O-phospho-L-threonyl-[protein] + ADP + H(+). Its function is as follows. Probable serine/threonine protein kinase which may function redundantly with MPK1-independent branch of the PCK1 pathway that is presumed to be required for the tolerance to high temperatures and staurosporine. The sequence is that of Serine/threonine-protein kinase ISR1 (ISR1) from Saccharomyces cerevisiae (strain ATCC 204508 / S288c) (Baker's yeast).